Here is a 258-residue protein sequence, read N- to C-terminus: UPF0246 protein CKO_03380 (258 aa).

Belongs to the UPF0246 family.

This Citrobacter koseri (strain ATCC BAA-895 / CDC 4225-83 / SGSC4696) protein is UPF0246 protein CKO_03380.